Here is a 523-residue protein sequence, read N- to C-terminus: DELLA protein RGL3 (523 aa).

The interval 1–28 (MKRSHQETSVEEEAPSMVEKLENGCGGG) is disordered. The DELLA motif signature appears at 34–38 (DEFLA). Positions 56-60 (LEQLE) match the LEXLE motif motif. A VHYNP motif motif is present at residues 78–82 (VHYNP). In terms of domain architecture, GRAS spans 148 to 516 (VLIEETGVRL…KPLIAASAWK (369 aa)). Residues 155-209 (VRLVQALVACAEAVQLENLSLADALVKRVGLLAASQAGAMGKVATYFAEALARRI) form a leucine repeat I (LRI) region. The VHIID stretch occupies residues 228 to 293 (QMNFYDSCPY…GGPPSFRLTG (66 aa)). The VHIID signature appears at 259–263 (VHVID). Positions 305-337 (ELGWKLAQLAQAIGVEFKFNGLTTERLSDLEPD) are leucine repeat II (LRII). Residues 348–437 (LVVNSVFELH…EVYLGRQILN (90 aa)) are PFYRE. An LXXLL motif motif is present at residues 356–360 (LHPVL). An SAW region spans residues 440-516 (ATEGSDRIER…KPLIAASAWK (77 aa)).

This sequence belongs to the GRAS family. DELLA subfamily. Interacts directly with the GID2/SLY1 component of the SCF(GID2) complex, suggesting that it may be ubiquitinated. Interacts (via N-terminus) with GID1A, GID1B and GID1B (via N-terminus). Interacts with the BOI proteins BOI, BRG1, BRG2 and BRG3. Phosphorylated. In terms of processing, may be ubiquitinated. As to expression, expressed at very low level. Mainly expressed in germinating seeds and flowers and siliques. Not expressed in other tissues.

The protein localises to the nucleus. Functionally, probable transcriptional regulator that acts as a repressor of the gibberellin (GA) signaling pathway. No effect of the BOI proteins on its stability. Probably acts by participating in large multiprotein complexes that repress transcription of GA-inducible genes. Its activity may be regulated by phytohormones such as auxin and ethylene. The chain is DELLA protein RGL3 (RGL3) from Arabidopsis thaliana (Mouse-ear cress).